The sequence spans 241 residues: Thiamine import ATP-binding protein ThiQ (241 aa).

In terms of domain architecture, ABC transporter spans 7 to 235 (IRLSDVRFSY…AGPEALRHYI (229 aa)). 37 to 44 (GPSGSGKS) lines the ATP pocket.

The protein belongs to the ABC transporter superfamily. Thiamine importer (TC 3.A.1.19.1) family. In terms of assembly, the complex is composed of two ATP-binding proteins (ThiQ), two transmembrane proteins (ThiP) and a solute-binding protein (ThiB).

It is found in the cell inner membrane. The catalysed reaction is thiamine(out) + ATP + H2O = thiamine(in) + ADP + phosphate + H(+). Its function is as follows. Part of the ABC transporter complex ThiBPQ involved in thiamine import. Responsible for energy coupling to the transport system. In Brucella melitensis biotype 1 (strain ATCC 23456 / CCUG 17765 / NCTC 10094 / 16M), this protein is Thiamine import ATP-binding protein ThiQ.